Consider the following 428-residue polypeptide: uncharacterized protein (428 aa).

One can recognise a Glutaredoxin domain in the interval 241–351 (KEEEEQSVGK…KLLGGCERVE (111 aa)). A compositionally biased stretch (acidic residues) spans 386 to 401 (EDDDDDDDEGDDDESV). Residues 386–405 (EDDDDDDDEGDDDESVKEER) are disordered.

This is an uncharacterized protein from Arabidopsis thaliana (Mouse-ear cress).